The sequence spans 213 residues: ATP synthase peripheral stalk subunit OSCP, mitochondrial (213 aa).

A mitochondrion-targeting transit peptide spans 1-23 (MAAPAVSGFSRQVRCFSTSVVRP). Residues 5–23 (AVSGFSRQVRCFSTSVVRP) carry the SIFI-degron motif. 4 positions are modified to N6-acetyllysine: lysine 54, lysine 60, lysine 70, and lysine 73. At lysine 90 the chain carries N6-succinyllysine. 2 positions are modified to N6-acetyllysine; alternate: lysine 100 and lysine 158. Residues lysine 100 and lysine 158 each carry the N6-succinyllysine; alternate modification. N6-acetyllysine is present on residues lysine 172, lysine 176, and lysine 192. Lysine 199 carries the N6-succinyllysine modification.

Belongs to the ATPase delta chain family. Component of the ATP synthase complex composed at least of ATP5F1A/subunit alpha, ATP5F1B/subunit beta, ATP5MC1/subunit c (homooctomer), MT-ATP6/subunit a, MT-ATP8/subunit 8, ATP5ME/subunit e, ATP5MF/subunit f, ATP5MG/subunit g, ATP5MK/subunit k, ATP5MJ/subunit j, ATP5F1C/subunit gamma, ATP5F1D/subunit delta, ATP5F1E/subunit epsilon, ATP5PF/subunit F6, ATP5PB/subunit b, ATP5PD/subunit d, ATP5PO/subunit OSCP. ATP synthase complex consists of a soluble F(1) head domain (subunits alpha(3) and beta(3)) - the catalytic core - and a membrane F(0) domain - the membrane proton channel (subunits c, a, 8, e, f, g, k and j). These two domains are linked by a central stalk (subunits gamma, delta, and epsilon) rotating inside the F1 region and a stationary peripheral stalk (subunits F6, b, d, and OSCP). Post-translationally, in response to mitochondrial stress, the precursor protein is ubiquitinated by the SIFI complex in the cytoplasm before mitochondrial import, leading to its degradation. Within the SIFI complex, UBR4 initiates ubiquitin chain that are further elongated or branched by KCMF1.

The protein resides in the mitochondrion. It is found in the mitochondrion inner membrane. In terms of biological role, subunit OSCP, of the mitochondrial membrane ATP synthase complex (F(1)F(0) ATP synthase or Complex V) that produces ATP from ADP in the presence of a proton gradient across the membrane which is generated by electron transport complexes of the respiratory chain. ATP synthase complex consist of a soluble F(1) head domain - the catalytic core - and a membrane F(1) domain - the membrane proton channel. These two domains are linked by a central stalk rotating inside the F(1) region and a stationary peripheral stalk. During catalysis, ATP synthesis in the catalytic domain of F(1) is coupled via a rotary mechanism of the central stalk subunits to proton translocation. In vivo, can only synthesize ATP although its ATP hydrolase activity can be activated artificially in vitro. Part of the complex F(0) domain. Part of the complex F(0) domain and the peripheric stalk, which acts as a stator to hold the catalytic alpha(3)beta(3) subcomplex and subunit a/ATP6 static relative to the rotary elements. This chain is ATP synthase peripheral stalk subunit OSCP, mitochondrial, found in Rhinolophus ferrumequinum (Greater horseshoe bat).